We begin with the raw amino-acid sequence, 726 residues long: Catalase-peroxidase (726 aa).

The tract at residues 1 to 33 is disordered; the sequence is MSTTDDTHNTLSTGKCPFHQGGHDRSAGAGTAS. The tryptophyl-tyrosyl-methioninium (Trp-Tyr) (with M-252) cross-link spans 105 to 226; sequence WHGAGTYRSI…LGATEMGLIY (122 aa). Residue His-106 is the Proton acceptor of the active site. The tryptophyl-tyrosyl-methioninium (Tyr-Met) (with W-105) cross-link spans 226-252; it reads YVNPEGPDHSGEPLSAAAAIRATFGNM. His-267 is a binding site for heme b.

This sequence belongs to the peroxidase family. Peroxidase/catalase subfamily. In terms of assembly, homodimer or homotetramer. Heme b serves as cofactor. Post-translationally, formation of the three residue Trp-Tyr-Met cross-link is important for the catalase, but not the peroxidase activity of the enzyme.

The enzyme catalyses H2O2 + AH2 = A + 2 H2O. It catalyses the reaction 2 H2O2 = O2 + 2 H2O. Bifunctional enzyme with both catalase and broad-spectrum peroxidase activity. This chain is Catalase-peroxidase, found in Salmonella paratyphi A (strain ATCC 9150 / SARB42).